We begin with the raw amino-acid sequence, 245 residues long: Chloride intracellular channel protein 2 (245 aa).

Positions 1–96 (MASLALNTQA…EEFLEKTLAP (96 aa)) are required for insertion into the membrane. Glu25 contributes to the glutathione binding site. The short motif at 30-33 (CPFC) is the G-site element. Residues Cys30 and Cys33 are joined by a disulfide bond. Residues 32 to 52 (FCQRLFMILWLKGVKFNVTTI) form a helical membrane-spanning segment. The 164-residue stretch at 76–239 (NKELKTDFIK…PEDKEIENTY (164 aa)) folds into the GST C-terminal domain. His227 provides a ligand contact to glutathione.

The protein belongs to the chloride channel CLIC family. Monomer. Interacts with TRAPPC2 and RYR2.

It is found in the cytoplasm. The protein resides in the membrane. The catalysed reaction is chloride(in) = chloride(out). It catalyses the reaction tert-butyl hydroperoxide + 2 glutathione = tert-butanol + glutathione disulfide + H2O. The enzyme catalyses cumene hydroperoxide + 2 glutathione = 2-phenylpropan-2-ol + glutathione disulfide + H2O. Functionally, in the soluble state, catalyzes glutaredoxin-like thiol disulfide exchange reactions with reduced glutathione as electron donor. Displays weak glutathione peroxidase activity. Can insert into membranes and form chloride ion channels. Membrane insertion seems to be redox-regulated and may occur only under oxidizing conditions. Modulates the activity of RYR2 and inhibits calcium influx. The protein is Chloride intracellular channel protein 2 of Rattus norvegicus (Rat).